The primary structure comprises 233 residues: Leucyl/phenylalanyl-tRNA--protein transferase (233 aa).

It belongs to the L/F-transferase family.

It is found in the cytoplasm. It carries out the reaction N-terminal L-lysyl-[protein] + L-leucyl-tRNA(Leu) = N-terminal L-leucyl-L-lysyl-[protein] + tRNA(Leu) + H(+). It catalyses the reaction N-terminal L-arginyl-[protein] + L-leucyl-tRNA(Leu) = N-terminal L-leucyl-L-arginyl-[protein] + tRNA(Leu) + H(+). The enzyme catalyses L-phenylalanyl-tRNA(Phe) + an N-terminal L-alpha-aminoacyl-[protein] = an N-terminal L-phenylalanyl-L-alpha-aminoacyl-[protein] + tRNA(Phe). Its function is as follows. Functions in the N-end rule pathway of protein degradation where it conjugates Leu, Phe and, less efficiently, Met from aminoacyl-tRNAs to the N-termini of proteins containing an N-terminal arginine or lysine. This Desulfatibacillum aliphaticivorans protein is Leucyl/phenylalanyl-tRNA--protein transferase.